The sequence spans 372 residues: Lysophosphatidic acid receptor 5 (372 aa).

Over 1 to 26 (MLANSSSTNSSVLPCPDYRPTHRLHL) the chain is Extracellular. 2 N-linked (GlcNAc...) asparagine glycosylation sites follow: N4 and N9. A helical transmembrane segment spans residues 27 to 47 (VVYSLVLAAGLPLNALALWVF). At 48–55 (LRALRVHS) the chain is on the cytoplasmic side. A helical membrane pass occupies residues 56 to 76 (VVSVYMCNLAASDLLFTLSLP). The Extracellular portion of the chain corresponds to 77–96 (VRLSYYALHHWPFPDLLCQT). C94 and C175 are joined by a disulfide. The chain crosses the membrane as a helical span at residues 97–117 (TGAIFQMNMYGSCIFLMLINV). The Cytoplasmic portion of the chain corresponds to 118 to 136 (DRYAAIVHPLRLRHLRRPR). Residues 137-157 (VARLLCLGVWALILVFAVPAA) traverse the membrane as a helical segment. The Extracellular portion of the chain corresponds to 158–187 (RVHRPSRCRYRDLEVRLCFESFSDELWKGR). Residues 188–208 (LLPLVLLAEALGFLLPLAAVV) form a helical membrane-spanning segment. Over 209–239 (YSSGRVFWTLARPDATQSQRRRKTVRLLLAN) the chain is Cytoplasmic. A helical transmembrane segment spans residues 240-260 (LVIFLLCFVPYNSTLAVYGLL). The Extracellular segment spans residues 261–276 (RSKLVAASVPARDRVR). A helical transmembrane segment spans residues 277–297 (GVLMVMVLLAGANCVLDPLVY). The Cytoplasmic segment spans residues 298-372 (YFSAEGFRNT…FTQCPQDSAL (75 aa)). The interval 312-372 (GTPHRARTSA…FTQCPQDSAL (61 aa)) is disordered. Composition is skewed to polar residues over residues 332-341 (SERSAVTTDA) and 357-372 (SHSL…DSAL).

This sequence belongs to the G-protein coupled receptor 1 family. In terms of tissue distribution, not expressed in frontal cortex, basal forebrain, caudate putamen, thalamus, or hippocampus.

It is found in the cell membrane. Functionally, receptor for lysophosphatidic acid (LPA), a mediator of diverse cellular activities. The protein is Lysophosphatidic acid receptor 5 (LPAR5) of Homo sapiens (Human).